The primary structure comprises 449 residues: MSSRKYFGTDGIRGRVGQGVISADFVLRLGNALGRVLTAGRSKRPLVLIGKDTRISGYMFEAALEAGLVAAGADVQLIGPMPTPAIAFLTSTLRADAGVVISASHNPHYDNGIKFFSAEGEKLDDATEAAIEAALDAPFHTVESERLGKAIRTRDAIGRYIEFCKASVPRGFTLHGLKMVLDCAHGATYHIAPMLFRELGAEVVVIGAAPDGLNINDGVGSTHIDNLAAKVRETGAQLGIAFDGDGDRVLMADDQGNPVDGDDLLYVLARSWQASGRLTGTVVGTLMTNYGLEKALAALQIPFQRAKVGDRYVHQALVEGGGTLGGETSGHLLCLDRATTGDGIVSALQVLEALGRDGHSLREALSSLSKVPQQTVNVRLGGGAAKAIVEAASVQQALQQAQAAVQGRGRAFLRPSGTEPVVRVTVEADEAGLMQDTLDRLAGAVRDAA.

Serine 104 functions as the Phosphoserine intermediate in the catalytic mechanism. Mg(2+)-binding residues include serine 104, aspartate 243, aspartate 245, and aspartate 247. Serine 104 carries the post-translational modification Phosphoserine.

This sequence belongs to the phosphohexose mutase family. The cofactor is Mg(2+). In terms of processing, activated by phosphorylation.

The enzyme catalyses alpha-D-glucosamine 1-phosphate = D-glucosamine 6-phosphate. Functionally, catalyzes the conversion of glucosamine-6-phosphate to glucosamine-1-phosphate. The polypeptide is Phosphoglucosamine mutase (Xanthomonas campestris pv. campestris (strain 8004)).